The chain runs to 194 residues: Phosphoheptose isomerase (194 aa).

The region spanning 31-186 (ICQRFQAGNK…CEQVESRLFA (156 aa)) is the SIS domain. 46–48 (NGG) provides a ligand contact to substrate. Residues H55 and E59 each contribute to the Zn(2+) site. Substrate is bound by residues E59, 88 to 89 (ND), 114 to 116 (STS), S119, and Q166. Residues Q166 and H174 each coordinate Zn(2+).

It belongs to the SIS family. GmhA subfamily. Requires Zn(2+) as cofactor.

It is found in the cytoplasm. The enzyme catalyses 2 D-sedoheptulose 7-phosphate = D-glycero-alpha-D-manno-heptose 7-phosphate + D-glycero-beta-D-manno-heptose 7-phosphate. The protein operates within carbohydrate biosynthesis; D-glycero-D-manno-heptose 7-phosphate biosynthesis; D-glycero-alpha-D-manno-heptose 7-phosphate and D-glycero-beta-D-manno-heptose 7-phosphate from sedoheptulose 7-phosphate: step 1/1. In terms of biological role, catalyzes the isomerization of sedoheptulose 7-phosphate in D-glycero-D-manno-heptose 7-phosphate. The sequence is that of Phosphoheptose isomerase from Synechocystis sp. (strain ATCC 27184 / PCC 6803 / Kazusa).